We begin with the raw amino-acid sequence, 247 residues long: uncharacterized protein (247 aa).

An N-terminal signal peptide occupies residues 1-35 (MWGPGVTAEGLSVAPAPPPLLPLLLLLALALVAPS). The helical transmembrane segment at 82-102 (LSGLLILLVLFAIGYFLQRII) threads the bilayer. The tract at residues 109–176 (YPRGQARPGQ…RGSGGRLPPS (68 aa)) is disordered. A compositionally biased stretch (low complexity) spans 111-120 (RGQARPGQAR). Residues 161 to 171 (SGGGRGRGSGG) show a composition bias toward gly residues.

It localises to the membrane. This is an uncharacterized protein from Mus musculus (Mouse).